A 459-amino-acid polypeptide reads, in one-letter code: Argininosuccinate lyase (459 aa).

The protein belongs to the lyase 1 family. Argininosuccinate lyase subfamily.

It is found in the cytoplasm. The enzyme catalyses 2-(N(omega)-L-arginino)succinate = fumarate + L-arginine. It participates in amino-acid biosynthesis; L-arginine biosynthesis; L-arginine from L-ornithine and carbamoyl phosphate: step 3/3. This chain is Argininosuccinate lyase, found in Chromobacterium violaceum (strain ATCC 12472 / DSM 30191 / JCM 1249 / CCUG 213 / NBRC 12614 / NCIMB 9131 / NCTC 9757 / MK).